The primary structure comprises 269 residues: Formamidopyrimidine-DNA glycosylase (269 aa).

Catalysis depends on Pro2, which acts as the Schiff-base intermediate with DNA. Catalysis depends on Glu3, which acts as the Proton donor. Lys57 (proton donor; for beta-elimination activity) is an active-site residue. DNA is bound by residues His90, Arg109, and Lys150. The segment at Gln235 to Lys269 adopts an FPG-type zinc-finger fold. Arg259 acts as the Proton donor; for delta-elimination activity in catalysis.

It belongs to the FPG family. Monomer. It depends on Zn(2+) as a cofactor.

It carries out the reaction Hydrolysis of DNA containing ring-opened 7-methylguanine residues, releasing 2,6-diamino-4-hydroxy-5-(N-methyl)formamidopyrimidine.. The catalysed reaction is 2'-deoxyribonucleotide-(2'-deoxyribose 5'-phosphate)-2'-deoxyribonucleotide-DNA = a 3'-end 2'-deoxyribonucleotide-(2,3-dehydro-2,3-deoxyribose 5'-phosphate)-DNA + a 5'-end 5'-phospho-2'-deoxyribonucleoside-DNA + H(+). In terms of biological role, involved in base excision repair of DNA damaged by oxidation or by mutagenic agents. Acts as a DNA glycosylase that recognizes and removes damaged bases. Has a preference for oxidized purines, such as 7,8-dihydro-8-oxoguanine (8-oxoG). Has AP (apurinic/apyrimidinic) lyase activity and introduces nicks in the DNA strand. Cleaves the DNA backbone by beta-delta elimination to generate a single-strand break at the site of the removed base with both 3'- and 5'-phosphates. The polypeptide is Formamidopyrimidine-DNA glycosylase (Escherichia coli (strain K12 / MC4100 / BW2952)).